The primary structure comprises 336 residues: S-adenosylmethionine:tRNA ribosyltransferase-isomerase (336 aa).

It belongs to the QueA family. Monomer.

Its subcellular location is the cytoplasm. The enzyme catalyses 7-aminomethyl-7-carbaguanosine(34) in tRNA + S-adenosyl-L-methionine = epoxyqueuosine(34) in tRNA + adenine + L-methionine + 2 H(+). It functions in the pathway tRNA modification; tRNA-queuosine biosynthesis. Transfers and isomerizes the ribose moiety from AdoMet to the 7-aminomethyl group of 7-deazaguanine (preQ1-tRNA) to give epoxyqueuosine (oQ-tRNA). The protein is S-adenosylmethionine:tRNA ribosyltransferase-isomerase of Sulfurihydrogenibium sp. (strain YO3AOP1).